A 445-amino-acid chain; its full sequence is Alpha-1,3-mannosyl-glycoprotein 2-beta-N-acetylglucosaminyltransferase (445 aa).

At 1-6 the chain is on the cytoplasmic side; it reads MLKKQS. A helical; Signal-anchor for type II membrane protein membrane pass occupies residues 7–29; it reads AGLVLWGAILFVAWNALLLLFFW. At 30–445 the chain is on the lumenal side; it reads TRPAPGRPPS…TWEGYDPSWN (416 aa). Cys113 and Cys143 are disulfide-bonded. Substrate contacts are provided by Arg115, Asp142, His188, and Asp210. A Mn(2+)-binding site is contributed by Asp211. An intrachain disulfide couples Cys237 to Cys303. Asp289 functions as the Proton acceptor in the catalytic mechanism. Residue Ser320 participates in substrate binding.

Belongs to the glycosyltransferase 13 family. In terms of assembly, interacts with MGAT4D. Interacts with BRI3 (isoforms 1 and 2); the interaction with isoform 2 is weaker than with isoform 1. It depends on Mn(2+) as a cofactor.

It is found in the golgi apparatus membrane. The protein localises to the cytoplasm. The protein resides in the perinuclear region. The enzyme catalyses N(4)-(alpha-D-Man-(1-&gt;3)-[alpha-D-Man-(1-&gt;3)-[alpha-D-Man-(1-&gt;6)]-alpha-D-Man-(1-&gt;6)]-beta-D-Man-(1-&gt;4)-beta-D-GlcNAc-(1-&gt;4)-beta-D-GlcNAc)-L-asparaginyl-[protein] (N-glucan mannose isomer 5A1,2) + UDP-N-acetyl-alpha-D-glucosamine = N(4)-{beta-D-GlcNAc-(1-&gt;2)-alpha-D-Man-(1-&gt;3)-[alpha-D-Man-(1-&gt;3)-[alpha-D-Man-(1-&gt;6)]-alpha-D-Man-(1-&gt;6)]-beta-D-Man-(1-&gt;4)-beta-D-GlcNAc-(1-&gt;4)-beta-D-GlcNAc}-L-asparaginyl-[protein] + UDP + H(+). It participates in protein modification; protein glycosylation. Functionally, initiates complex N-linked carbohydrate formation. Essential for the conversion of high-mannose to hybrid and complex N-glycans. The protein is Alpha-1,3-mannosyl-glycoprotein 2-beta-N-acetylglucosaminyltransferase (MGAT1) of Homo sapiens (Human).